The following is a 462-amino-acid chain: Nuclear factor interleukin-3-regulated protein (462 aa).

Lys24 participates in a covalent cross-link: Glycyl lysine isopeptide (Lys-Gly) (interchain with G-Cter in SUMO2). In terms of domain architecture, bZIP spans 73-136; sequence DAMYWEKRRK…GLISSTAYAQ (64 aa). Positions 79–95 are basic motif; the sequence is KRRKNNEAAKRSREKRR. The leucine-zipper stretch occupies residues 99-106; it reads LVLENKLI. Disordered regions lie at residues 189–237 and 258–302; these read DVSE…DDRG and SPPL…IHSP. Residues 201–210 show a composition bias toward polar residues; it reads ESSVQGSCRS. A Glycyl lysine isopeptide (Lys-Gly) (interchain with G-Cter in SUMO2) cross-link involves residue Lys214. Lys219 participates in a covalent cross-link: Glycyl lysine isopeptide (Lys-Gly) (interchain with G-Cter in SUMO1); alternate. Residue Lys219 forms a Glycyl lysine isopeptide (Lys-Gly) (interchain with G-Cter in SUMO2); alternate linkage. Over residues 227-237 the composition is skewed to basic and acidic residues; sequence SYTREPRDDRG. The span at 264–274 shows a compositional bias: polar residues; that stretch reads VNRSSSNSPRT. Residues 299–363 form a necessary for transcriptional repression and sufficient for interaction with DR1 region; it reads IHSPVELKHV…PIDMTSKRHF (65 aa). The residue at position 301 (Ser301) is a Phosphoserine. Glycyl lysine isopeptide (Lys-Gly) (interchain with G-Cter in SUMO2) cross-links involve residues Lys306, Lys314, Lys326, Lys332, Lys337, and Lys350. Ser353 bears the Phosphoserine mark. Glycyl lysine isopeptide (Lys-Gly) (interchain with G-Cter in SUMO2) cross-links involve residues Lys360, Lys394, Lys401, Lys406, Lys412, Lys419, Lys424, Lys434, and Lys448.

It belongs to the bZIP family. NFIL3 subfamily. In terms of assembly, homodimer. Binds DNA as a dimer. Interacts with DR1. Interacts with PER2 and CRY2. Interacts with NR0B2. Interacts with MYSM1. Expressed in bladder stomach, thyroid, spinal cord, lymph node, trachea, adrenal gland, bone marrow and muscle.

The protein localises to the nucleus. Acts as a transcriptional regulator that recognizes and binds to the sequence 5'-[GA]TTA[CT]GTAA[CT]-3', a sequence present in many cellular and viral promoters. Represses transcription from promoters with activating transcription factor (ATF) sites. Represses promoter activity in osteoblasts. Represses transcriptional activity of PER1. Represses transcriptional activity of PER2 via the B-site on the promoter. Activates transcription from the interleukin-3 promoter in T-cells. Competes for the same consensus-binding site with PAR DNA-binding factors (DBP, HLF and TEF). Component of the circadian clock that acts as a negative regulator for the circadian expression of PER2 oscillation in the cell-autonomous core clock. Protects pro-B cells from programmed cell death. Represses the transcription of CYP2A5. Positively regulates the expression and activity of CES2 by antagonizing the repressive action of NR1D1 on CES2. Required for the development of natural killer cell precursors. The chain is Nuclear factor interleukin-3-regulated protein (NFIL3) from Homo sapiens (Human).